Here is a 168-residue protein sequence, read N- to C-terminus: Siroheme decarboxylase NirH subunit (168 aa).

The protein belongs to the Ahb/Nir family. Probably forms a complex composed of NirD, NirL, NirG and NirH. All proteins are required for the total conversion of siroheme to didecarboxysiroheme.

The enzyme catalyses siroheme + 2 H(+) = 12,18-didecarboxysiroheme + 2 CO2. The protein operates within porphyrin-containing compound metabolism. In terms of biological role, involved in heme d1 biosynthesis. Catalyzes the decarboxylation of siroheme into didecarboxysiroheme. The chain is Siroheme decarboxylase NirH subunit from Stutzerimonas stutzeri (Pseudomonas stutzeri).